A 1091-amino-acid chain; its full sequence is Neural cell adhesion molecule 1 (1091 aa).

The signal sequence occupies residues 1-19; sequence MLPAAALPWTLFFLGAAAS. 5 consecutive Ig-like C2-type domains span residues 20 to 113, 116 to 205, 212 to 301, 308 to 403, and 406 to 495; these read LQVD…VNVK, QKLM…KDIQ, PSVR…ATIH, PKIT…LEVQ, and PKLQ…FILV. Residues 20 to 711 are Extracellular-facing; that stretch reads LQVDIVPSQG…STSPTSGLGT (692 aa). 2 disulfide bridges follow: cysteine 41/cysteine 96 and cysteine 139/cysteine 189. Heparin contacts are provided by residues 152–156 and 161–165; these read KHKGR and KKDVR. Asparagine 222 is a glycosylation site (N-linked (GlcNAc...) asparagine). Cysteine 235 and cysteine 287 are disulfide-bonded. Residues asparagine 315, asparagine 347, asparagine 423, asparagine 449, and asparagine 478 are each glycosylated (N-linked (GlcNAc...) asparagine). A disulfide bridge links cysteine 329 with cysteine 385. A disulfide bond links cysteine 426 and cysteine 479. Fibronectin type-III domains are found at residues 499-598 and 600-696; these read TPSS…TQPV and EPSA…SAQP. A helical membrane pass occupies residues 712–729; the sequence is AAIVGILIVIFVLLLVAV. The Cytoplasmic portion of the chain corresponds to 730–1091; it reads DVTCYFLNKC…ATEIRHLQQK (362 aa). Disordered stretches follow at residues 756 to 809, 840 to 916, 937 to 1023, and 1041 to 1091; these read GAKG…TEPE, ATAQ…NNLS, ETSK…GTFK, and TPAS…LQQK. The segment covering 758-799 has biased composition (basic and acidic residues); that stretch reads KGKDMEEGKAAFSKDESKEPIVEVRTEEERTPNHDGGKHTEP. Residues 845–856 are compositionally biased toward low complexity; sequence SPTSETTTLTSS. 2 stretches are compositionally biased toward polar residues: residues 904–916 and 980–1012; these read DTPS…NNLS and QPST…PSQN. 2 stretches are compositionally biased toward basic and acidic residues: residues 1013-1023 and 1068-1091; these read EDFKMDEGTFK and KTEK…LQQK.

Post-translationally, polysialylated by ST8SIA2 and ST8SIA4. Polysialylation modulates cell interactions by confering both attractive and repulsive properties that are highly regulated by ST8SIA2 and ST8SIA4. Polysialylation is formed on a-2,3-linked sialic acid of core glycans.

Its subcellular location is the cell membrane. Its function is as follows. This protein is a cell adhesion molecule involved in neuron-neuron adhesion, neurite fasciculation, outgrowth of neurites, etc. The chain is Neural cell adhesion molecule 1 from Gallus gallus (Chicken).